We begin with the raw amino-acid sequence, 239 residues long: THAP domain-containing protein 3 (239 aa).

Residues 1 to 82 form a THAP-type zinc finger; that stretch reads MPKSCAARQC…LKHNAVPTVF (82 aa). The interval 84–177 is disordered; the sequence is FQDPTQQVRE…RRTPNKQPSD (94 aa). Ser-122 carries the post-translational modification Phosphoserine. The HCFC1-binding motif (HBM) motif lies at 177-180; sequence DHSY.

In terms of assembly, component of a THAP1/THAP3-HCFC1-OGT complex that contains at least, either THAP1 or THAP3, HCFC1 and OGT. Interacts directly with OGT and HCFC1 (via its HBM). As to expression, highly expressed in heart, skeletal muscle and placenta. Weaker expression in brain, kidney and liver.

In terms of biological role, component of a THAP1/THAP3-HCFC1-OGT complex that is required for the regulation of the transcriptional activity of RRM1. The chain is THAP domain-containing protein 3 (THAP3) from Homo sapiens (Human).